The primary structure comprises 230 residues: Probable phosphatase IndB (230 aa).

Catalysis depends on aspartate 8, which acts as the Nucleophile. Residues aspartate 8, aspartate 10, and aspartate 169 each contribute to the Mg(2+) site. The active-site Proton donor is the aspartate 10.

This sequence belongs to the HAD-like hydrolase superfamily. It depends on Mg(2+) as a cofactor.

Its function is as follows. Part of an operon that could be involved in the biosynthesis of the blue pigment indigoidine, which is implicated in pathogenicity and protection from oxidative stress. The chain is Probable phosphatase IndB from Dickeya dadantii (strain 3937) (Erwinia chrysanthemi (strain 3937)).